The chain runs to 263 residues: MALASVLERPLPVNQRGFFGLGGRADLLDLGPGSLSDGLSLAAPGWGVPEEPGIEMLHGTTTLAFKFRHGVIVAADSRATAGAYIASQTVKKVIEINPYLLGTMAGGAADCSFWERLLARQCRIYELRNKERISVAAASKLLANMVYQYKGMGLSMGTMICGWDKRGPGLYYVDSEGNRISGATFSVGSGSVYAYGVMDRGYSYDLEVEQAYDLARRAIYQATYRDAYSGGAVNLYHVREDGWIRVSSDNVADLHEKYSGSTP.

Residues M1–G59 constitute a propeptide, removed in mature form. The active-site Nucleophile is T60. A108 is a binding site for bortezomib.

It belongs to the peptidase T1B family. The 26S proteasome consists of a 20S proteasome core and two 19S regulatory subunits. The 20S proteasome core is a barrel-shaped complex made of 28 subunits that are arranged in four stacked rings. The two outer rings are each formed by seven alpha subunits, and the two inner rings are formed by seven beta subunits. The proteolytic activity is exerted by three beta-subunits PSMB5, PSMB6 and PSMB7. Directly interacts with POMP. Interacts with ABCB1 and TAP1. As to quaternary structure, (Microbial infection) Interacts with HIV-1 TAT protein.

Its subcellular location is the cytoplasm. It localises to the nucleus. The enzyme catalyses Cleavage of peptide bonds with very broad specificity.. Its function is as follows. Component of the 20S core proteasome complex involved in the proteolytic degradation of most intracellular proteins. This complex plays numerous essential roles within the cell by associating with different regulatory particles. Associated with two 19S regulatory particles, forms the 26S proteasome and thus participates in the ATP-dependent degradation of ubiquitinated proteins. The 26S proteasome plays a key role in the maintenance of protein homeostasis by removing misfolded or damaged proteins that could impair cellular functions, and by removing proteins whose functions are no longer required. Associated with the PA200 or PA28, the 20S proteasome mediates ubiquitin-independent protein degradation. This type of proteolysis is required in several pathways including spermatogenesis (20S-PA200 complex) or generation of a subset of MHC class I-presented antigenic peptides (20S-PA28 complex). Within the 20S core complex, PSMB5 displays a chymotrypsin-like activity. The chain is Proteasome subunit beta type-5 from Homo sapiens (Human).